The sequence spans 288 residues: Energy-coupling factor transporter ATP-binding protein EcfA2 (288 aa).

One can recognise an ABC transporter domain in the interval 2–244; that stretch reads IKFEKVNYTY…VDFLKAHELG (243 aa). 39–46 contacts ATP; it reads GHTGSGKS.

The protein belongs to the ABC transporter superfamily. Energy-coupling factor EcfA family. In terms of assembly, forms a stable energy-coupling factor (ECF) transporter complex composed of 2 membrane-embedded substrate-binding proteins (S component), 2 ATP-binding proteins (A component) and 2 transmembrane proteins (T component).

It localises to the cell membrane. ATP-binding (A) component of a common energy-coupling factor (ECF) ABC-transporter complex. Unlike classic ABC transporters this ECF transporter provides the energy necessary to transport a number of different substrates. The chain is Energy-coupling factor transporter ATP-binding protein EcfA2 from Lactococcus lactis subsp. lactis (strain IL1403) (Streptococcus lactis).